The following is a 623-amino-acid chain: Aspartate--tRNA(Asp/Asn) ligase (623 aa).

Residue glutamate 175 coordinates L-aspartate. Residues 199–202 (QQFK) form an aspartate region. L-aspartate contacts are provided by arginine 221 and histidine 455. Position 221 to 223 (221 to 223 (RDE)) interacts with ATP. Glutamate 517 is a binding site for ATP. Residue arginine 524 coordinates L-aspartate. 569-572 (GVDR) provides a ligand contact to ATP.

The protein belongs to the class-II aminoacyl-tRNA synthetase family. Type 1 subfamily. Homodimer.

Its subcellular location is the cytoplasm. It catalyses the reaction tRNA(Asx) + L-aspartate + ATP = L-aspartyl-tRNA(Asx) + AMP + diphosphate. Functionally, aspartyl-tRNA synthetase with relaxed tRNA specificity since it is able to aspartylate not only its cognate tRNA(Asp) but also tRNA(Asn). Reaction proceeds in two steps: L-aspartate is first activated by ATP to form Asp-AMP and then transferred to the acceptor end of tRNA(Asp/Asn). This chain is Aspartate--tRNA(Asp/Asn) ligase, found in Methylocella silvestris (strain DSM 15510 / CIP 108128 / LMG 27833 / NCIMB 13906 / BL2).